The chain runs to 360 residues: Mitogen-activated protein kinase 14 (360 aa).

Serine 2 carries the N-acetylserine modification. Serine 2 carries the post-translational modification Phosphoserine. Threonine 16 carries the post-translational modification Phosphothreonine. The Protein kinase domain maps to 24–308 (YQNLSPVGSG…AAQALAHAYF (285 aa)). ATP contacts are provided by residues 30–38 (VGSGAYGSV) and lysine 53. The residue at position 53 (lysine 53) is an N6-acetyllysine. Aspartate 150 (proton acceptor) is an active-site residue. N6-acetyllysine is present on lysine 152. Threonine 180 is modified (phosphothreonine; by MAP2K3, MAP2K4, MAP2K6 and autocatalysis). The short motif at 180–182 (TGY) is the TXY element. Residue tyrosine 182 is modified to Phosphotyrosine; by MAP2K3, MAP2K4, MAP2K6 and autocatalysis. Threonine 263 is modified (phosphothreonine). At tyrosine 323 the chain carries Phosphotyrosine; by ZAP70.

It belongs to the protein kinase superfamily. CMGC Ser/Thr protein kinase family. MAP kinase subfamily. As to quaternary structure, component of a signaling complex containing at least AKAP13, PKN1, MAPK14, ZAK and MAP2K3. Within this complex, AKAP13 interacts directly with PKN1, which in turn recruits MAPK14, MAP2K3 and ZAK. Binds to a kinase interaction motif within the protein tyrosine phosphatase, PTPRR. This interaction retains MAPK14 in the cytoplasm and prevents nuclear accumulation. Interacts with SPAG9 and GADD45A. Interacts with CDC25B, CDC25C, DUSP1, DUSP10, DUSP16, NP60, SUPT20H and TAB1. Interacts with casein kinase II subunits CSNK2A1 and CSNK2B. Interacts with PPM1D. Interacts with CDK5RAP3; recruits PPM1D to MAPK14 and may regulate its dephosphorylation. Interacts with DUSP2; this interaction does not lead to catalytic activation of DUSP2 and dephosphrylation of MAPK14. Mg(2+) is required as a cofactor. Post-translationally, dually phosphorylated on Thr-180 and Tyr-182 by the MAP2Ks MAP2K3/MKK3, MAP2K4/MKK4 and MAP2K6/MKK6 in response to inflammatory citokines, environmental stress or growth factors, which activates the enzyme. Dual phosphorylation can also be mediated by TAB1-mediated autophosphorylation. TCR engagement in T-cells also leads to Tyr-323 phosphorylation by ZAP70. Dephosphorylated and inactivated by DUPS1, DUSP10 and DUSP16. PPM1D also mediates dephosphorylation and inactivation of MAPK14. In terms of processing, acetylated at Lys-53 and Lys-152 by KAT2B and EP300. Acetylation at Lys-53 increases the affinity for ATP and enhances kinase activity. Lys-53 and Lys-152 are deacetylated by HDAC3. Ubiquitinated. Ubiquitination leads to degradation by the proteasome pathway.

It localises to the cytoplasm. Its subcellular location is the nucleus. The catalysed reaction is L-seryl-[protein] + ATP = O-phospho-L-seryl-[protein] + ADP + H(+). The enzyme catalyses L-threonyl-[protein] + ATP = O-phospho-L-threonyl-[protein] + ADP + H(+). With respect to regulation, activated by cell stresses such as DNA damage, heat shock, osmotic shock, anisomycin and sodium arsenite, as well as pro-inflammatory stimuli such as bacterial lipopolysaccharide (LPS) and interleukin-1. Activation occurs through dual phosphorylation of Thr-180 and Tyr-182 by either of two dual specificity kinases, MAP2K3/MKK3 or MAP2K6/MKK6, and potentially also MAP2K4/MKK4, as well as by TAB1-mediated autophosphorylation. MAPK14 phosphorylated on both Thr-180 and Tyr-182 is 10-20-fold more active than MAPK14 phosphorylated only on Thr-180, whereas MAPK14 phosphorylated on Tyr-182 alone is inactive. whereas Thr-180 is necessary for catalysis, Tyr-182 may be required for auto-activation and substrate recognition. Phosphorylated at Tyr-323 by ZAP70 in an alternative activation pathway in response to TCR signaling in T-cells. This alternative pathway is inhibited by GADD45A. Inhibited by dual specificity phosphatases, such as DUSP1, DUSP10, and DUSP16. Specifically inhibited by the binding of pyridinyl-imidazole compounds, which are cytokine-suppressive anti-inflammatory drugs (CSAID). SB203580 is an inhibitor of MAPK14. Its function is as follows. Serine/threonine kinase which acts as an essential component of the MAP kinase signal transduction pathway. MAPK14 is one of the four p38 MAPKs which play an important role in the cascades of cellular responses evoked by extracellular stimuli such as pro-inflammatory cytokines or physical stress leading to direct activation of transcription factors. Accordingly, p38 MAPKs phosphorylate a broad range of proteins and it has been estimated that they may have approximately 200 to 300 substrates each. Some of the targets are downstream kinases which are activated through phosphorylation and further phosphorylate additional targets. RPS6KA5/MSK1 and RPS6KA4/MSK2 can directly phosphorylate and activate transcription factors such as CREB1, ATF1, the NF-kappa-B isoform RELA/NFKB3, STAT1 and STAT3, but can also phosphorylate histone H3 and the nucleosomal protein HMGN1. RPS6KA5/MSK1 and RPS6KA4/MSK2 play important roles in the rapid induction of immediate-early genes in response to stress or mitogenic stimuli, either by inducing chromatin remodeling or by recruiting the transcription machinery. On the other hand, two other kinase targets, MAPKAPK2/MK2 and MAPKAPK3/MK3, participate in the control of gene expression mostly at the post-transcriptional level, by phosphorylating ZFP36 (tristetraprolin) and ELAVL1, and by regulating EEF2K, which is important for the elongation of mRNA during translation. MKNK1/MNK1 and MKNK2/MNK2, two other kinases activated by p38 MAPKs, regulate protein synthesis by phosphorylating the initiation factor EIF4E2. MAPK14 also interacts with casein kinase II, leading to its activation through autophosphorylation and further phosphorylation of TP53/p53. In the cytoplasm, the p38 MAPK pathway is an important regulator of protein turnover. For example, CFLAR is an inhibitor of TNF-induced apoptosis whose proteasome-mediated degradation is regulated by p38 MAPK phosphorylation. In a similar way, MAPK14 phosphorylates the ubiquitin ligase SIAH2, regulating its activity towards EGLN3. MAPK14 may also inhibit the lysosomal degradation pathway of autophagy by interfering with the intracellular trafficking of the transmembrane protein ATG9. Another function of MAPK14 is to regulate the endocytosis of membrane receptors by different mechanisms that impinge on the small GTPase RAB5A. In addition, clathrin-mediated EGFR internalization induced by inflammatory cytokines and UV irradiation depends on MAPK14-mediated phosphorylation of EGFR itself as well as of RAB5A effectors. Ectodomain shedding of transmembrane proteins is regulated by p38 MAPKs as well. In response to inflammatory stimuli, p38 MAPKs phosphorylate the membrane-associated metalloprotease ADAM17. Such phosphorylation is required for ADAM17-mediated ectodomain shedding of TGF-alpha family ligands, which results in the activation of EGFR signaling and cell proliferation. Another p38 MAPK substrate is FGFR1. FGFR1 can be translocated from the extracellular space into the cytosol and nucleus of target cells, and regulates processes such as rRNA synthesis and cell growth. FGFR1 translocation requires p38 MAPK activation. In the nucleus, many transcription factors are phosphorylated and activated by p38 MAPKs in response to different stimuli. Classical examples include ATF1, ATF2, ATF6, ELK1, PTPRH, DDIT3, TP53/p53 and MEF2C and MEF2A. The p38 MAPKs are emerging as important modulators of gene expression by regulating chromatin modifiers and remodelers. The promoters of several genes involved in the inflammatory response, such as IL6, IL8 and IL12B, display a p38 MAPK-dependent enrichment of histone H3 phosphorylation on 'Ser-10' (H3S10ph) in LPS-stimulated myeloid cells. This phosphorylation enhances the accessibility of the cryptic NF-kappa-B-binding sites marking promoters for increased NF-kappa-B recruitment. Phosphorylates CDC25B and CDC25C which is required for binding to 14-3-3 proteins and leads to initiation of a G2 delay after ultraviolet radiation. Phosphorylates TIAR following DNA damage, releasing TIAR from GADD45A mRNA and preventing mRNA degradation. The p38 MAPKs may also have kinase-independent roles, which are thought to be due to the binding to targets in the absence of phosphorylation. Protein O-Glc-N-acylation catalyzed by the OGT is regulated by MAPK14, and, although OGT does not seem to be phosphorylated by MAPK14, their interaction increases upon MAPK14 activation induced by glucose deprivation. This interaction may regulate OGT activity by recruiting it to specific targets such as neurofilament H, stimulating its O-Glc-N-acylation. Required in mid-fetal development for the growth of embryo-derived blood vessels in the labyrinth layer of the placenta. Also plays an essential role in developmental and stress-induced erythropoiesis, through regulation of EPO gene expression. Phosphorylates S100A9 at 'Thr-113'. This Canis lupus familiaris (Dog) protein is Mitogen-activated protein kinase 14.